The primary structure comprises 265 residues: MKAVVLTLAVLFLTGSQARHFWQQDDPQSSWDRVKDFATVYVDAIKDSGRDYVTQFEASALGKQLNLKLLDNWDSLTSTFAKVREQLGPVTREFWDNLEKETESLRQEMNKDLQEVKQKVQPYLDEFQKKWQEELQIYRQKVAPLGEELREGARQKVQELQDKLTPLAEEMRDRARAHVETLRQQLAPYSDELRQRMAARFEMLKEGGGSLVQYHAKASEQLKALGEKAKPALEDLRQGLLPVLENLKVSILAAIDEASKKLNAQ.

Residues methionine 1 to alanine 18 form the signal peptide. Repeat copies occupy residues leucine 67–glycine 88 and proline 89–asparagine 110. Residues leucine 67–glutamine 265 form a 10 X approximate tandem repeats region. Residue methionine 109 is modified to Methionine sulfoxide. One copy of the 3; half-length repeat lies at lysine 111–glutamine 121. 5 consecutive repeat copies span residues proline 122 to valine 142, proline 144 to threonine 165, proline 166 to alanine 187, proline 188 to glycine 209, and serine 210 to lysine 230. Residues proline 231–leucine 241 form a 9; half-length repeat. Repeat 10 spans residues proline 242–glutamine 265.

It belongs to the apolipoprotein A1/A4/E family. As to quaternary structure, homodimer. Interacts with APOA1BP and CLU. Component of a sperm activating protein complex (SPAP), consisting of APOA1, an immunoglobulin heavy chain, an immunoglobulin light chain and albumin. Interacts with NDRG1. Interacts with SCGB3A2. Interacts with NAXE and YJEFN3. Post-translationally, glycosylated. Palmitoylated. In terms of processing, phosphorylation sites are present in the extracellular medium. As to expression, major protein of plasma HDL, also found in chylomicrons.

It is found in the secreted. In terms of biological role, participates in the reverse transport of cholesterol from tissues to the liver for excretion by promoting cholesterol efflux from tissues and by acting as a cofactor for the lecithin cholesterol acyltransferase (LCAT). As part of the SPAP complex, activates spermatozoa motility. This Balaenoptera acutorostrata scammoni (North Pacific minke whale) protein is Apolipoprotein A-I (APOA1).